The chain runs to 322 residues: HPr kinase/phosphorylase (322 aa).

Catalysis depends on residues H146 and K167. An ATP-binding site is contributed by 161–168 (GDSGLGKS). S168 contacts Mg(2+). The active-site Proton acceptor; for phosphorylation activity. Proton donor; for dephosphorylation activity is D185. The tract at residues 209-218 (LEVRGLGLLD) is important for the catalytic mechanism of both phosphorylation and dephosphorylation. Residue E210 participates in Mg(2+) binding. R250 is a catalytic residue. The important for the catalytic mechanism of dephosphorylation stretch occupies residues 271-276 (QVAAGR).

This sequence belongs to the HPrK/P family. Homohexamer. Mg(2+) serves as cofactor.

The enzyme catalyses [HPr protein]-L-serine + ATP = [HPr protein]-O-phospho-L-serine + ADP + H(+). It catalyses the reaction [HPr protein]-O-phospho-L-serine + phosphate + H(+) = [HPr protein]-L-serine + diphosphate. Functionally, catalyzes the ATP- as well as the pyrophosphate-dependent phosphorylation of a specific serine residue in HPr, a phosphocarrier protein of the phosphoenolpyruvate-dependent sugar phosphotransferase system (PTS). HprK/P also catalyzes the pyrophosphate-producing, inorganic phosphate-dependent dephosphorylation (phosphorolysis) of seryl-phosphorylated HPr (P-Ser-HPr). In Paraburkholderia phymatum (strain DSM 17167 / CIP 108236 / LMG 21445 / STM815) (Burkholderia phymatum), this protein is HPr kinase/phosphorylase.